The following is a 92-amino-acid chain: UPF0297 protein TTE1249 (92 aa).

This sequence belongs to the UPF0297 family.

The polypeptide is UPF0297 protein TTE1249 (Caldanaerobacter subterraneus subsp. tengcongensis (strain DSM 15242 / JCM 11007 / NBRC 100824 / MB4) (Thermoanaerobacter tengcongensis)).